We begin with the raw amino-acid sequence, 556 residues long: Urocanate hydratase (556 aa).

Residues 52–53, Q130, 176–178, E196, R201, 242–243, 263–267, 273–274, and Y322 contribute to the NAD(+) site; these read GG, GMG, NA, QTSAH, and YL. C410 is an active-site residue. G492 contributes to the NAD(+) binding site.

It belongs to the urocanase family. It depends on NAD(+) as a cofactor.

The protein localises to the cytoplasm. It carries out the reaction 4-imidazolone-5-propanoate = trans-urocanate + H2O. The protein operates within amino-acid degradation; L-histidine degradation into L-glutamate; N-formimidoyl-L-glutamate from L-histidine: step 2/3. Its function is as follows. Catalyzes the conversion of urocanate to 4-imidazolone-5-propionate. This Shewanella woodyi (strain ATCC 51908 / MS32) protein is Urocanate hydratase.